Here is a 239-residue protein sequence, read N- to C-terminus: Probable 2-phosphosulfolactate phosphatase (239 aa).

The protein belongs to the ComB family. The cofactor is Mg(2+).

The catalysed reaction is (2R)-O-phospho-3-sulfolactate + H2O = (2R)-3-sulfolactate + phosphate. This is Probable 2-phosphosulfolactate phosphatase from Clostridium botulinum (strain 657 / Type Ba4).